A 495-amino-acid chain; its full sequence is Tyrosine 3-monooxygenase (495 aa).

S19 is modified (phosphoserine; by CaMK2). Residue S31 is modified to Phosphoserine. Phosphoserine; by CaMK2 and PKA is present on S40. Basic and acidic residues predominate over residues 41–53 (LIEDARKEREKAE). Positions 41–65 (LIEDARKEREKAEAASAASSEPGDL) are disordered. Fe cation-binding residues include H328, H333, and E373. A Phosphoserine modification is found at S469.

The protein belongs to the biopterin-dependent aromatic amino acid hydroxylase family. As to quaternary structure, homotetramer. Interacts (when phosphorylated at Ser-19) with YWHAG; one YWHAG dimer bounds to one TH tetramer this interaction may influence the phosphorylation and dephosphorylation of other sites. Fe(2+) serves as cofactor. Phosphorylated on Ser-19, Ser-31 and Ser-40 by several protein kinases with different site specificities. Phosphorylation at Ser-31 and Ser-40 leads to an increase of TH activity. Phosphorylation at Ser-40 activates the enzyme and also counteracts the feedback inhibition of TH by catecholamines. Phosphorylation of Ser-19 and Ser-31 triggers the proteasomal degradation of TH through the ubiquitin-proteasome pathway. Phosphorylation at Ser-31 facilitates transport of TH from the soma to the nerve terminals via the microtubule network. Phosphorylation at Ser-19 induces the high-affinity binding to the 14-3-3 protein YWHAG; this interaction may influence the phosphorylation and dephosphorylation of other sites. Ser-19 increases the phosphorylation at Ser-40 in a hierarchical manner, leading to increased activity.

Its subcellular location is the cytoplasm. The protein localises to the perinuclear region. The protein resides in the nucleus. It localises to the cell projection. It is found in the axon. Its subcellular location is the cytoplasmic vesicle. The protein localises to the secretory vesicle. The protein resides in the synaptic vesicle. The enzyme catalyses (6R)-L-erythro-5,6,7,8-tetrahydrobiopterin + L-tyrosine + O2 = (4aS,6R)-4a-hydroxy-L-erythro-5,6,7,8-tetrahydrobiopterin + L-dopa. Its pathway is catecholamine biosynthesis; dopamine biosynthesis; dopamine from L-tyrosine: step 1/2. With respect to regulation, inhibited in feedback fashion by the catecholamine neurotransmitters, especially by dopamine in competition with tetrahydrobiopterin. Phosphorylation of several Ser/Thr residues in the N-terminus regulates the catalytic activity. Ser-31 and Ser-40 are readily phosphorylated to activate the catalytic activity. A Cysteine modification induced by N-ethylmaleimide (NEM), inhibits tyrosine 3-monooxygenase activity through the modification of the Cys-174. Functionally, catalyzes the conversion of L-tyrosine to L-dihydroxyphenylalanine (L-Dopa), the rate-limiting step in the biosynthesis of cathecolamines, dopamine, noradrenaline, and adrenaline. Uses tetrahydrobiopterin and molecular oxygen to convert tyrosine to L-Dopa. In addition to tyrosine, is able to catalyze the hydroxylation of phenylalanine and tryptophan with lower specificity. Positively regulates the regression of retinal hyaloid vessels during postnatal development. This is Tyrosine 3-monooxygenase (TH) from Canis lupus familiaris (Dog).